The primary structure comprises 5098 residues: Malformin synthetase mlfA (5098 aa).

The interval Glu-225–Leu-616 is adenylation 1. One can recognise a Carrier 1 domain in the interval Ser-756 to Glu-829. Position 790 is an O-(pantetheine 4'-phosphoryl)serine (Ser-790). Residues Glu-867–Ala-1298 are condensation 1. Residues Asp-1326–Arg-1715 are adenylation 2. The Carrier 2 domain maps to Thr-1853–Ala-1930. Ser-1890 is modified (O-(pantetheine 4'-phosphoryl)serine). Disordered regions lie at residues Ala-1930–Asp-1960 and Gly-1993–Ser-2022. Composition is skewed to low complexity over residues Ser-1933–Asp-1957 and Gly-1993–Ser-2011. Residues Glu-2063–Leu-2478 are condensation 2. The segment at Val-2501–Leu-2893 is adenylation 3. The region spanning Arg-3029–Arg-3105 is the Carrier 3 domain. Ser-3066 carries the post-translational modification O-(pantetheine 4'-phosphoryl)serine. Condensation stretches follow at residues Trp-3122–Gln-3587 and Asn-3608–Met-4027. Residues His-4052 to Phe-4442 are adenylation 4. In terms of domain architecture, Carrier 4 spans Met-4576–Val-4652. Residue Ser-4613 is modified to O-(pantetheine 4'-phosphoryl)serine. Residues Asp-4689–Asn-5016 form a condensation 5 region.

It belongs to the NRP synthetase family.

The protein operates within secondary metabolite biosynthesis. Its function is as follows. Nonribosomal peptide synthetase; part of the gene cluster that mediates the biosynthesis of malformins, cyclic pentapeptides with a disulfide bond between 2 consecutive cysteins, that show potential anti-tumor as well as antimalarial and antitrypanosomal properties. The nonribosomal peptide synthetase mlfA is responsible of the formation of the cyclic pentapeptide. The malformin biosynthesis clusters in malformin-producing fungi also contain enzymes involved in the formation of the disulfide bond between the two consecutive cysteins within malformins, in addition to additional tailoring enzymes such as methyltransferases or oxidoreductases. They are also composed of up to 4 major facilitator superfamily transporters, and transcription factors probably involved in the regulation of the expression of those clusters. The protein is Malformin synthetase mlfA of Aspergillus homomorphus (strain CBS 101889).